Reading from the N-terminus, the 877-residue chain is Leucine--tRNA ligase (877 aa).

Positions 43 to 53 (PYPSGRIHMGH) match the 'HIGH' region motif. The short motif at 628-632 (KMSKS) is the 'KMSKS' region element. K631 serves as a coordination point for ATP.

This sequence belongs to the class-I aminoacyl-tRNA synthetase family.

Its subcellular location is the cytoplasm. The enzyme catalyses tRNA(Leu) + L-leucine + ATP = L-leucyl-tRNA(Leu) + AMP + diphosphate. This chain is Leucine--tRNA ligase, found in Brucella anthropi (strain ATCC 49188 / DSM 6882 / CCUG 24695 / JCM 21032 / LMG 3331 / NBRC 15819 / NCTC 12168 / Alc 37) (Ochrobactrum anthropi).